The chain runs to 504 residues: Maturase K (504 aa).

Belongs to the intron maturase 2 family. MatK subfamily.

Its subcellular location is the plastid. The protein resides in the chloroplast. Functionally, usually encoded in the trnK tRNA gene intron. Probably assists in splicing its own and other chloroplast group II introns. This chain is Maturase K, found in Eichhornia crassipes (Water hyacinth).